Consider the following 317-residue polypeptide: Olfactory receptor 6P1 (317 aa).

Residues 1-25 lie on the Extracellular side of the membrane; sequence MRNLSGGHVEEFVLVGFPTTPPLQL. Residue Asn-3 is glycosylated (N-linked (GlcNAc...) asparagine). The helical transmembrane segment at 26–46 threads the bilayer; the sequence is LLFVLFFAIYLLTLLENALIV. Residues 47 to 54 lie on the Cytoplasmic side of the membrane; the sequence is FTIWLAPS. A helical membrane pass occupies residues 55-75; the sequence is LHRPMYFFLGHLSFLELWYIN. Over 76-99 the chain is Extracellular; that stretch reads VTIPRLLAAFLTQDGRVSYVGCMT. A disulfide bridge connects residues Cys-97 and Cys-189. A helical transmembrane segment spans residues 100-120; it reads QLYFFIALACTECVLLAVMAY. The Cytoplasmic portion of the chain corresponds to 121 to 139; the sequence is DRYLAICGPLLYPSLMPSS. Residues 140–160 traverse the membrane as a helical segment; the sequence is LATRLAAASWGSGFFSSMMKL. Topologically, residues 161-197 are extracellular; that stretch reads LFISQLSYCGPNIINHFFCDISPLLNLTCSDKEQAEL. N-linked (GlcNAc...) asparagine glycosylation occurs at Asn-186. A helical membrane pass occupies residues 198 to 217; sequence VDFLLALVMILLPLLAVVSS. Residues 218–237 lie on the Cytoplasmic side of the membrane; sequence YTAIIAAILRIPTSRGRHKA. Residues 238-258 traverse the membrane as a helical segment; it reads FSTCAAHLAVVVIYYSSTLFT. Topologically, residues 259 to 271 are extracellular; it reads YARPRAMYTFNHN. The chain crosses the membrane as a helical span at residues 272-292; the sequence is KIISVLYTIIVPFFNPAIYCL. Residues 293-317 are Cytoplasmic-facing; sequence RNKEVKEAFRKTVMGRCHYPRDVQD.

This sequence belongs to the G-protein coupled receptor 1 family.

It is found in the cell membrane. Its function is as follows. Odorant receptor. This Homo sapiens (Human) protein is Olfactory receptor 6P1 (OR6P1).